Consider the following 511-residue polypeptide: Maturase K (511 aa).

The protein belongs to the intron maturase 2 family. MatK subfamily.

Its subcellular location is the plastid. It localises to the chloroplast. Usually encoded in the trnK tRNA gene intron. Probably assists in splicing its own and other chloroplast group II introns. This chain is Maturase K, found in Primula veris (Cowslip).